We begin with the raw amino-acid sequence, 194 residues long: Imidazoleglycerol-phosphate dehydratase (194 aa).

Belongs to the imidazoleglycerol-phosphate dehydratase family.

Its subcellular location is the cytoplasm. It catalyses the reaction D-erythro-1-(imidazol-4-yl)glycerol 3-phosphate = 3-(imidazol-4-yl)-2-oxopropyl phosphate + H2O. It participates in amino-acid biosynthesis; L-histidine biosynthesis; L-histidine from 5-phospho-alpha-D-ribose 1-diphosphate: step 6/9. The sequence is that of Imidazoleglycerol-phosphate dehydratase from Chlorobaculum tepidum (strain ATCC 49652 / DSM 12025 / NBRC 103806 / TLS) (Chlorobium tepidum).